The following is a 310-amino-acid chain: GMP synthase [glutamine-hydrolyzing] subunit B (310 aa).

Residues 2 to 185 (FKTEPFIEES…LGLPDQIAHR (184 aa)) form the GMPS ATP-PPase domain. 29 to 35 (SGGVDSS) serves as a coordination point for ATP.

As to quaternary structure, heterodimer composed of a glutamine amidotransferase subunit (A) and a GMP-binding subunit (B).

It carries out the reaction XMP + L-glutamine + ATP + H2O = GMP + L-glutamate + AMP + diphosphate + 2 H(+). It functions in the pathway purine metabolism; GMP biosynthesis; GMP from XMP (L-Gln route): step 1/1. Its function is as follows. Catalyzes the synthesis of GMP from XMP. This Methanococcus maripaludis (strain C7 / ATCC BAA-1331) protein is GMP synthase [glutamine-hydrolyzing] subunit B.